Here is a 314-residue protein sequence, read N- to C-terminus: Three-prime repair exonuclease 1 (314 aa).

Residues aspartate 18 and glutamate 20 each coordinate Mg(2+). A substrate-binding site is contributed by glutamate 20–alanine 21. Position 78 is a phosphoserine (serine 78). Tyrosine 129 contacts substrate. Position 167 is a phosphoserine (serine 167). Histidine 195 (proton donor/acceptor) is an active-site residue. Aspartate 200 provides a ligand contact to Mg(2+). Aspartate 200 is a binding site for substrate. The necessary for endoplasmic reticulum localization stretch occupies residues threonine 236 to glutamate 314. The disordered stretch occupies residues arginine 240–aspartate 278. The segment at proline 243–glutamate 314 is interaction with UBQLN1. Low complexity predominate over residues alanine 247–threonine 260. The residue at position 261 (serine 261) is a Phosphoserine. The tract at residues alanine 281–glutamate 314 is necessary for cytoplasmic retention.

The protein belongs to the exonuclease superfamily. TREX family. As to quaternary structure, homodimer. Interacts (via proline-rich region) with TCERG1/CA150 (via the second WW domain). Component of the SET complex, composed of at least ANP32A, APEX1, HMGB2, NME1, SET and TREX1. Within this complex, directly interacts with SET; this interaction does not result in TREX1 inhibition. Also interacts with NME1, but only following translocation to the nucleus. Directly interacts with UBQLN1 (via ubiquitin-like domain); the interaction may control TREX1 subcellular location. Mg(2+) serves as cofactor. Post-translationally, ubiquitinated, but not targeted to proteasomal degradation. Ubiquitination may be important for interaction with UBQLN1. In terms of tissue distribution, detected in thymus, spleen, liver, brain, heart, small intestine and colon.

The protein localises to the nucleus. It is found in the cytoplasm. It localises to the cytosol. Its subcellular location is the endoplasmic reticulum membrane. The catalysed reaction is Exonucleolytic cleavage in the 3'- to 5'-direction to yield nucleoside 5'-phosphates.. Its function is as follows. Major cellular 3'-to-5' DNA exonuclease which digests single-stranded DNA (ssDNA) and double-stranded DNA (dsDNA) with mismatched 3' termini. Prevents cell-intrinsic initiation of autoimmunity. Acts by metabolizing DNA fragments from endogenous retroelements, including L1, LTR and SINE elements. Plays a key role in degradation of DNA fragments at cytosolic micronuclei arising from genome instability: its association with the endoplasmic reticulum membrane directs TREX1 to ruptured micronuclei, leading to micronuclear DNA degradation. Micronuclear DNA degradation is required to limit CGAS activation and subsequent inflammation. Unless degraded, these DNA fragments accumulate in the cytosol and activate the cGAS-STING innate immune signaling, leading to the production of type I interferon. Prevents chronic ATM-dependent checkpoint activation, by processing ssDNA polynucleotide species arising from the processing of aberrant DNA replication intermediates. Inefficiently degrades oxidized DNA, such as that generated upon antimicrobial reactive oxygen production or upon absorption of UV light. During GZMA-mediated cell death, contributes to DNA damage in concert with NME1. NME1 nicks one strand of DNA and TREX1 removes bases from the free 3' end to enhance DNA damage and prevent DNA end reannealing and rapid repair. The protein is Three-prime repair exonuclease 1 of Homo sapiens (Human).